The primary structure comprises 597 residues: DNA primase (597 aa).

The Zn(2+) site is built by Cys40, His43, Cys61, and Cys64. Residues 40–64 form a CHC2-type zinc finger; it reads CPFHGEKTPSFSVSPEKQIFHCFGC. In terms of domain architecture, Toprim spans 262 to 342; that stretch reads QEALLVEGFA…RVKVASLPNG (81 aa). Positions 268, 311, and 313 each coordinate Mg(2+). Over residues 429-447 the composition is skewed to basic and acidic residues; it reads LSRSQRERTKPREAPDGET. A disordered region spans residues 429-448; sequence LSRSQRERTKPREAPDGETA.

Belongs to the DnaG primase family. In terms of assembly, monomer. Interacts with replicative helicase DnaB, as DnaB(6):DnaG(3). A stable complex DnaI(6):DnaB(6):DnaG(3) fragment can be isolated; DnaI and DnaG do not contact each other (DnaI in this complex is derived from B.subtilis). Zn(2+) is required as a cofactor. Requires Mg(2+) as cofactor.

The catalysed reaction is ssDNA + n NTP = ssDNA/pppN(pN)n-1 hybrid + (n-1) diphosphate.. Its function is as follows. RNA polymerase that catalyzes the synthesis of short RNA molecules used as primers for DNA polymerase during DNA replication. This Geobacillus stearothermophilus (Bacillus stearothermophilus) protein is DNA primase.